The sequence spans 410 residues: Mating-type locus allele B4 protein (410 aa).

The tract at residues methionine 1–cysteine 110 is variable domain between B alleles. Residues valine 107 to histidine 184 constitute a DNA-binding region (homeobox; TALE-type). The segment at arginine 111–valine 410 is highly conserved between B alleles. Disordered stretches follow at residues arginine 202 to aspartate 241, threonine 278 to leucine 335, and arginine 375 to glutamate 394. Residues serine 206–serine 222 are compositionally biased toward low complexity. The Nuclear localization signal motif lies at lysine 276 to arginine 308. Basic residues predominate over residues glutamine 294–serine 307. A compositionally biased stretch (polar residues) spans proline 312–leucine 335. Positions proline 333–valine 410 are not essential for B4 function. A compositionally biased stretch (basic residues) spans arginine 375–glycine 388.

Belongs to the TALE/M-ATYP homeobox family.

Its subcellular location is the nucleus. In terms of biological role, the B locus has at least 25 alleles, and any combination of two different B alleles yields a multimeric regulatory protein, that activates genes responsible for the pathogenicity and for the sexual development of the fungus within the corn plant. The chain is Mating-type locus allele B4 protein from Mycosarcoma maydis (Corn smut fungus).